Reading from the N-terminus, the 88-residue chain is Small ribosomal subunit protein bS16 (88 aa).

The protein belongs to the bacterial ribosomal protein bS16 family.

The chain is Small ribosomal subunit protein bS16 from Staphylococcus saprophyticus subsp. saprophyticus (strain ATCC 15305 / DSM 20229 / NCIMB 8711 / NCTC 7292 / S-41).